The chain runs to 330 residues: 1-aminocyclopropane-1-carboxylate oxidase 2 (330 aa).

The Fe2OG dioxygenase domain maps to 153–253 (PNFGTKVSNY…RMSIASFYNP (101 aa)). Fe cation is bound by residues histidine 177, aspartate 179, and histidine 234.

The protein belongs to the iron/ascorbate-dependent oxidoreductase family. In terms of assembly, monomer. The cofactor is Fe cation.

The catalysed reaction is 1-aminocyclopropane-1-carboxylate + L-ascorbate + O2 = ethene + L-dehydroascorbate + hydrogen cyanide + CO2 + 2 H2O. Its pathway is alkene biosynthesis; ethylene biosynthesis via S-adenosyl-L-methionine; ethylene from S-adenosyl-L-methionine: step 2/2. The chain is 1-aminocyclopropane-1-carboxylate oxidase 2 (ACO2) from Malus domestica (Apple).